Here is a 428-residue protein sequence, read N- to C-terminus: Dihydroorotase (428 aa).

Zn(2+) contacts are provided by His59 and His61. Residues 61 to 63 and Asn93 contribute to the substrate site; that span reads HLR. Asp151, His178, and His231 together coordinate Zn(2+). Position 277 (Asn277) interacts with substrate. Asp304 provides a ligand contact to Zn(2+). Asp304 is an active-site residue. Residues His308 and 322–323 each bind substrate; that span reads FG.

This sequence belongs to the metallo-dependent hydrolases superfamily. DHOase family. Class I DHOase subfamily. Zn(2+) serves as cofactor.

The enzyme catalyses (S)-dihydroorotate + H2O = N-carbamoyl-L-aspartate + H(+). The protein operates within pyrimidine metabolism; UMP biosynthesis via de novo pathway; (S)-dihydroorotate from bicarbonate: step 3/3. Its function is as follows. Catalyzes the reversible cyclization of carbamoyl aspartate to dihydroorotate. This chain is Dihydroorotase, found in Bacillus cereus (strain AH187).